The following is a 401-amino-acid chain: NADH-quinone oxidoreductase subunit D 2 (401 aa).

The protein belongs to the complex I 49 kDa subunit family. NDH-1 is composed of 14 different subunits. Subunits NuoB, C, D, E, F, and G constitute the peripheral sector of the complex.

The protein resides in the cell inner membrane. It catalyses the reaction a quinone + NADH + 5 H(+)(in) = a quinol + NAD(+) + 4 H(+)(out). Functionally, NDH-1 shuttles electrons from NADH, via FMN and iron-sulfur (Fe-S) centers, to quinones in the respiratory chain. The immediate electron acceptor for the enzyme in this species is believed to be ubiquinone. Couples the redox reaction to proton translocation (for every two electrons transferred, four hydrogen ions are translocated across the cytoplasmic membrane), and thus conserves the redox energy in a proton gradient. This is NADH-quinone oxidoreductase subunit D 2 from Thermodesulfovibrio yellowstonii (strain ATCC 51303 / DSM 11347 / YP87).